A 150-amino-acid chain; its full sequence is Myosin, essential light chain (150 aa).

2 EF-hand domains span residues 3–38 (ASADQIQECFSIFDKDNDGKVSVEDIGACLRSLGKS) and 75–110 (EQQKEMLDAFKALDKEGHGTIQGAELRQLLTTLGDY). Ca(2+) contacts are provided by D16, D18, D20, K22, and D27.

As to quaternary structure, myosin is a hexamer of 2 heavy chains and 4 light chains (two regulatory light chains and two essential light chains).

The polypeptide is Myosin, essential light chain (mlcE) (Dictyostelium discoideum (Social amoeba)).